We begin with the raw amino-acid sequence, 536 residues long: Phosphoenolpyruvate carboxykinase (ATP) (536 aa).

Substrate is bound by residues arginine 61, tyrosine 195, and lysine 201. ATP is bound by residues lysine 201, histidine 220, and 236-244; that span reads GLSGTGKTT. Mn(2+) contacts are provided by lysine 201 and histidine 220. Residue aspartate 257 coordinates Mn(2+). The ATP site is built by glutamate 285, arginine 322, and threonine 447. A substrate-binding site is contributed by arginine 322.

This sequence belongs to the phosphoenolpyruvate carboxykinase (ATP) family. It depends on Mn(2+) as a cofactor.

It is found in the cytoplasm. The enzyme catalyses oxaloacetate + ATP = phosphoenolpyruvate + ADP + CO2. It participates in carbohydrate biosynthesis; gluconeogenesis. Functionally, involved in the gluconeogenesis. Catalyzes the conversion of oxaloacetate (OAA) to phosphoenolpyruvate (PEP) through direct phosphoryl transfer between the nucleoside triphosphate and OAA. The sequence is that of Phosphoenolpyruvate carboxykinase (ATP) from Brucella suis biovar 1 (strain 1330).